A 582-amino-acid chain; its full sequence is ATP-dependent lipid A-core flippase (582 aa).

5 consecutive transmembrane segments (helical) span residues 16 to 36, 64 to 84, 153 to 173, 253 to 273, and 275 to 295; these read LWPT…ALIL, LLWM…TSYI, IIGL…ILVV, PIIQ…ASFP, and VMDS…IALM. The ABC transmembrane type-1 domain occupies 28-310; that stretch reads IVAGIALILN…LTNVNAQFQR (283 aa). Positions 342 to 578 constitute an ABC transporter domain; it reads LEFRNVTFTY…HGVYAQLHKM (237 aa). ATP is bound at residue 376-383; sequence GRSGSGKS.

It belongs to the ABC transporter superfamily. Lipid exporter (TC 3.A.1.106) family. Homodimer.

It is found in the cell inner membrane. The catalysed reaction is ATP + H2O + lipid A-core oligosaccharideSide 1 = ADP + phosphate + lipid A-core oligosaccharideSide 2.. Its function is as follows. Involved in lipopolysaccharide (LPS) biosynthesis. Translocates lipid A-core from the inner to the outer leaflet of the inner membrane. Transmembrane domains (TMD) form a pore in the inner membrane and the ATP-binding domain (NBD) is responsible for energy generation. This chain is ATP-dependent lipid A-core flippase, found in Salmonella choleraesuis (strain SC-B67).